The primary structure comprises 436 residues: Xylose isomerase (436 aa).

Residues Asp-306 and Asp-308 each contribute to the Mg(2+) site.

The protein belongs to the xylose isomerase family. As to quaternary structure, homotetramer. Mg(2+) is required as a cofactor.

The protein localises to the cytoplasm. The catalysed reaction is alpha-D-xylose = alpha-D-xylulofuranose. This Sinorhizobium fredii (strain NBRC 101917 / NGR234) protein is Xylose isomerase.